Consider the following 1187-residue polypeptide: Probable histidine kinase 5 (1187 aa).

The Extracellular segment spans residues 1 to 175; it reads MSRVGECGGG…QNNALSFNHG (175 aa). The helical transmembrane segment at 176–196 threads the bilayer; sequence MIFSLSASLGIVVILVVITIF. At 197–226 the chain is on the cytoplasmic side; that stretch reads KRGKQANELCQHEKLLQTPSVKISRKWSKR. Residues 227–247 form a helical membrane-spanning segment; that stretch reads ALLLGVLVGLCSSVWIFSSMH. Over 248-531 the chain is Extracellular; the sequence is ADVVARRIEN…FKHAPSLPWS (284 aa). Positions 295-519 constitute a CHASE domain; the sequence is NPSAIDQKTF…GDPTRKHVMH (225 aa). The helical transmembrane segment at 532–552 threads the bilayer; that stretch reads AIMISSAVAIIVLLVGYIIYA. Over 553–1187 the chain is Cytoplasmic; it reads TLNSLEEAED…LEADATDPLT (635 aa). Residues 587–862 enclose the Histidine kinase domain; that stretch reads TVSHEIRTPM…TFSFTAIFKE (276 aa). Histidine 590 carries the phosphohistidine; by autocatalysis modification. Response regulatory domains are found at residues 886-1017 and 1041-1178; these read RALV…SKAL and NILV…AHFL. 4-aspartylphosphate occurs at positions 942 and 1091.

Post-translationally, activation probably requires a transfer of a phosphate group between a His in the transmitter domain and an Asp of the receiver domain. Highly expressed in young leaves and at lower levels in roots, mature leaves, stems and spikelets.

It is found in the cell membrane. The catalysed reaction is ATP + protein L-histidine = ADP + protein N-phospho-L-histidine.. Its function is as follows. Cytokinin receptor related to bacterial two-component regulators. Functions as a histidine kinase and transmits the stress signal to a downstream MAPK cascade. The polypeptide is Probable histidine kinase 5 (Oryza sativa subsp. japonica (Rice)).